The chain runs to 309 residues: Dicarboxylate carrier UCP2 (309 aa).

Residues 1–16 (MVGFKATDVPPTATVK) are Mitochondrial intermembrane-facing. 3 Solcar repeats span residues 11–106 (PTAT…VKQF), 114–203 (AGIG…IKDT), and 212–297 (DDLP…LKRA). The important for interaction with long-chain fatty acids stretch occupies residues 16–63 (KFLGAGTAACIADLITFPLDTAKVRLQIQGESQGLVRTAASAQYRGVL). Residues 17 to 40 (FLGAGTAACIADLITFPLDTAKVR) traverse the membrane as a helical segment. Over 41–77 (LQIQGESQGLVRTAASAQYRGVLGTILTMVRTEGPRS) the chain is Mitochondrial matrix. The helical transmembrane segment at 78 to 103 (LYNGLVAGLQRQMSFASVRIGLYDSV) threads the bilayer. The Mitochondrial intermembrane portion of the chain corresponds to 104 to 119 (KQFYTKGSEHAGIGSR). The chain crosses the membrane as a helical span at residues 120–145 (LLAGSTTGALAVAVAQPTDVVKVRFQ). Residues 146 to 173 (AQARAGGGRRYQSTVEAYKTIAREEGIR) are Mitochondrial matrix-facing. The helical transmembrane segment at 174 to 199 (GLWKGTSPNVARNAIVNCAELVTYDL) threads the bilayer. Residues 200-217 (IKDTLLKANLMTDDLPCH) lie on the Mitochondrial intermembrane side of the membrane. A helical membrane pass occupies residues 218 to 242 (FTSAFGAGFCTTVIASPVDVVKTRY). Over 243 to 268 (MNSALGQYHSAGHCALTMLRKEGPRA) the chain is Mitochondrial matrix. Residues 269 to 294 (FYKGFMPSFLRLGSWNVVMFVTYEQL) form a helical membrane-spanning segment. Positions 278–285 (LRLGSWNV) are important for interaction with long-chain fatty acids. Over 295 to 309 (KRALMAAYQSREAPF) the chain is Mitochondrial intermembrane.

It belongs to the mitochondrial carrier (TC 2.A.29) family. Homotetramer. Adopts an asymmetrical dimer of dimers functional form. Interacts with MICU1 (when methylated); leading to decrease the calcium sensitivity of MICU1. Widely expressed. Highest in spleen, lung, white and brown adipose tissues. 4-6 times higher levels are detected in white adipose tissue of ob/ob and db/db mice when compared to lean littermates. Expressed in neurons of the ventromedial nucleus of the hypothalamus (at protein level). Expressed in thymocytes (at protein level).

The protein resides in the mitochondrion inner membrane. It catalyses the reaction L-aspartate(out) + phosphate(in) + H(+)(in) = L-aspartate(in) + phosphate(out) + H(+)(out). It carries out the reaction oxaloacetate(out) + phosphate(in) + H(+)(in) = oxaloacetate(in) + phosphate(out) + H(+)(out). The catalysed reaction is (S)-malate(out) + phosphate(in) + H(+)(in) = (S)-malate(in) + phosphate(out) + H(+)(out). The enzyme catalyses malonate(out) + phosphate(in) + H(+)(in) = malonate(in) + phosphate(out) + H(+)(out). It catalyses the reaction sulfate(out) + phosphate(in) + H(+)(in) = sulfate(in) + phosphate(out) + H(+)(out). It carries out the reaction (S)-malate(out) = (S)-malate(in). The catalysed reaction is L-aspartate(out) = L-aspartate(in). The enzyme catalyses phosphate(in) = phosphate(out). It catalyses the reaction chloride(in) = chloride(out). It carries out the reaction H(+)(in) = H(+)(out). The catalysed reaction is a long-chain fatty acid(out) = a long-chain fatty acid(in). Proton conductance is activated by free long-chain fatty acids and allosterically inhibited by purine nucleotides. Could be constitutively inhibited by GDP. In terms of biological role, antiporter that exports dicarboxylate intermediates of the Krebs cycle in exchange for phosphate plus a proton across the inner membrane of mitochondria, a process driven by mitochondrial motive force with an overall impact on glycolysis, glutaminolysis and glutathione-dependent redox balance. Continuous export of oxaloacetate and related four-carbon dicarboxylates from mitochondrial matrix into the cytosol negatively regulates the oxidation of acetyl-CoA substrates via the Krebs cycle lowering the ATP/ADP ratio and reactive oxygen species (ROS) production. May mediate inducible proton entry into the mitochondrial matrix affecting ATP turnover as a protection mechanism against oxidative stress. The proton currents are most likely associated with fatty acid flipping across the inner membrane of mitochondria in a metabolic process regulated by free fatty acids and purine nucleotides. Regulates the use of glucose as a source of energy. Required for glucose-induced DRP1-dependent mitochondrial fission and neuron activation in the ventromedial nucleus of the hypothalamus (VMH). This mitochondrial adaptation mechanism modulates the VMH pool of glucose-excited neurons with an impact on systemic glucose homeostasis. Regulates ROS levels and metabolic reprogramming of macrophages during the resolution phase of inflammation. Attenuates ROS production in response to IL33 to preserve the integrity of the Krebs cycle required for persistent production of itaconate and subsequent GATA3-dependent differentiation of inflammation-resolving alternatively activated macrophages. Can unidirectionally transport anions including L-malate, L-aspartate, phosphate and chloride ions. Does not mediate adaptive thermogenesis. This Mus musculus (Mouse) protein is Dicarboxylate carrier UCP2 (Ucp2).